A 158-amino-acid polypeptide reads, in one-letter code: MPLLLTGKQFHNDLKTNKCLAIFAPLEGGYETRLLRRMRAKGFKTFITSARGLGDPEVFLLKLHGVRPPHLGHQSVGRNGALGEVQQVIPQASELFNENDKNKLLWLLEGQVLSQSELESLIEICTNDNKLSIVVEMGGSRKLEWKPLSNYILDEFES.

The protein belongs to the complex I NdhN subunit family. In terms of assembly, NDH-1 can be composed of about 15 different subunits; different subcomplexes with different compositions have been identified which probably have different functions.

It is found in the cellular thylakoid membrane. The catalysed reaction is a plastoquinone + NADH + (n+1) H(+)(in) = a plastoquinol + NAD(+) + n H(+)(out). It carries out the reaction a plastoquinone + NADPH + (n+1) H(+)(in) = a plastoquinol + NADP(+) + n H(+)(out). In terms of biological role, NDH-1 shuttles electrons from an unknown electron donor, via FMN and iron-sulfur (Fe-S) centers, to quinones in the respiratory and/or the photosynthetic chain. The immediate electron acceptor for the enzyme in this species is believed to be plastoquinone. Couples the redox reaction to proton translocation, and thus conserves the redox energy in a proton gradient. Cyanobacterial NDH-1 also plays a role in inorganic carbon-concentration. The protein is NAD(P)H-quinone oxidoreductase subunit N of Prochlorococcus marinus (strain MIT 9312).